The primary structure comprises 776 residues: G protein-regulated inducer of neurite outgrowth 3 (776 aa).

2 disordered regions span residues 1-37 (MGTV…RHRP) and 68-312 (VCEH…IKEV). Residues 101–118 (QLPGSSQPAASAPSSAAG) are compositionally biased toward low complexity. 2 stretches are compositionally biased toward polar residues: residues 129–161 (PANQ…SQRT) and 193–203 (ETIQGTVQTPV). Over residues 208–217 (VVSHSSSPVG) the composition is skewed to low complexity. Over residues 242–274 (SGCSENKQPSVTASGPQGTTSVTPQPTPLTSEP) the composition is skewed to polar residues. Residues S332 and S365 each carry the phosphoserine modification. Disordered regions lie at residues 518–637 (ISKA…RPSR) and 723–748 (LIKT…LRGR). Basic and acidic residues predominate over residues 520-552 (KADHSGSLDPTNKGDAREKKPASPQVVKEKEST). Residues 566–580 (PKSQESGGTESAANP) show a composition bias toward polar residues. Residues 604–620 (SLSLPSDPMGDSSPGSG) show a composition bias toward low complexity. Polar residues predominate over residues 725–742 (KTQNSQTRRSISSDTSSN).

In terms of biological role, may be involved in neurite outgrowth. This chain is G protein-regulated inducer of neurite outgrowth 3 (GPRIN3), found in Homo sapiens (Human).